We begin with the raw amino-acid sequence, 493 residues long: NAD(P)H-quinone oxidoreductase chain 4, chloroplastic (493 aa).

Helical transmembrane passes span 4–24 (FPWLSIIILFPLFAAFFIPLL), 34–54 (WYTLGICLLDFLVMSYIFGYY), 87–107 (MGLILLTGLVTTLAVLAAWPI), 111–131 (PKLFYFLMLVMYSGQIGLFTS), 134–154 (LFLFFLMWELELIPIYLLISL), 167–187 (FIFYTAIGSLFLFIATFTVCF), 212–232 (ILYLGFGFAYAVKLPIIPFHT), 242–262 (HYSTCMLLAGILLKMGGYGWI), 276–296 (FAPWLVILGTVQIIYAASVCL), 313–333 (MGFVLIGICSFTNIGLSGAIC), 334–354 (QMISHGLIGASLFFLAGTTYD), 385–405 (SLALPTMSGFVAEMMIFLGII), 417–437 (FIILFQALGVILTPIYLLSML), and 462–482 (VFIIVSLFIPVIIIGLYPNIL).

The protein belongs to the complex I subunit 4 family.

The protein localises to the plastid. It is found in the chloroplast thylakoid membrane. It catalyses the reaction a plastoquinone + NADH + (n+1) H(+)(in) = a plastoquinol + NAD(+) + n H(+)(out). The catalysed reaction is a plastoquinone + NADPH + (n+1) H(+)(in) = a plastoquinol + NADP(+) + n H(+)(out). In Chara vulgaris (Common stonewort), this protein is NAD(P)H-quinone oxidoreductase chain 4, chloroplastic.